A 217-amino-acid chain; its full sequence is 2-phospho-L-lactate guanylyltransferase (217 aa).

It belongs to the CofC family. Homodimer.

It carries out the reaction (2S)-2-phospholactate + GTP + H(+) = (2S)-lactyl-2-diphospho-5'-guanosine + diphosphate. It participates in cofactor biosynthesis; coenzyme F420 biosynthesis. Functionally, guanylyltransferase that catalyzes the activation of (2S)-2-phospholactate (2-PL) as (2S)-lactyl-2-diphospho-5'-guanosine, via the condensation of 2-PL with GTP. It is involved in the biosynthesis of coenzyme F420, a hydride carrier cofactor. The chain is 2-phospho-L-lactate guanylyltransferase from Halorubrum lacusprofundi (strain ATCC 49239 / DSM 5036 / JCM 8891 / ACAM 34).